Reading from the N-terminus, the 116-residue chain is Large ribosomal subunit protein uL24 (116 aa).

Positions 1–21 (MATNNGAGKARHKFHVKKGDT) are disordered.

It belongs to the universal ribosomal protein uL24 family. Part of the 50S ribosomal subunit.

In terms of biological role, one of two assembly initiator proteins, it binds directly to the 5'-end of the 23S rRNA, where it nucleates assembly of the 50S subunit. One of the proteins that surrounds the polypeptide exit tunnel on the outside of the subunit. The sequence is that of Large ribosomal subunit protein uL24 from Gloeobacter violaceus (strain ATCC 29082 / PCC 7421).